A 704-amino-acid chain; its full sequence is Polyribonucleotide nucleotidyltransferase (704 aa).

Positions 487 and 493 each coordinate Mg(2+). Residues 554-613 enclose the KH domain; it reads PRLLTIKIHPDKIREVIGKGGSTIQAITKETGTQIDIQDDGTIIIASVNAIAAQAAKSRI. One can recognise an S1 motif domain in the interval 623 to 691; it reads GRIYEGKVAK…KQGRIRLSIK (69 aa).

Belongs to the polyribonucleotide nucleotidyltransferase family. In terms of assembly, component of the RNA degradosome, which is a multiprotein complex involved in RNA processing and mRNA degradation. The cofactor is Mg(2+).

The protein localises to the cytoplasm. The catalysed reaction is RNA(n+1) + phosphate = RNA(n) + a ribonucleoside 5'-diphosphate. Functionally, involved in mRNA degradation. Catalyzes the phosphorolysis of single-stranded polyribonucleotides processively in the 3'- to 5'-direction. In Xanthomonas campestris pv. campestris (strain 8004), this protein is Polyribonucleotide nucleotidyltransferase.